The sequence spans 862 residues: Protein JOKA2 (862 aa).

Residues 6–90 (SIVIKVKYEE…NPLRISARLN (85 aa)) enclose the PB1 domain. Low complexity predominate over residues 92–106 (GERSGRASARSSGNS). Disordered stretches follow at residues 92–117 (GERS…VQPP), 194–234 (KGNT…ASNE), and 295–345 (VRNS…DSSG). Polar residues predominate over residues 325–345 (SASSSKVKQCNWDSPNADSSG). The ZZ-type; degenerate zinc finger occupies 442–492 (HKGVRCDGCGVHPITGPRFISKVKENYDLCSICFAEMGNDADYIRMDRPLT). 4 residues coordinate Zn(2+): Cys447, Cys450, Cys471, and Cys474. Residues 811–860 (SVDDLCGVAEWDPILEELKEMGFCDKEMNKKLLKKNNGSIKRVVMDLIAG) enclose the UBA domain. Residues 817-824 (GVAEWDPI) carry the ATG8 interacting motif (AIM) motif.

Interacts (via C-terminal AIM motif) with ATG8CL.

Its subcellular location is the vacuole. The protein resides in the cytoplasmic vesicle. It localises to the autophagosome. Its function is as follows. Autophagic substrate that functions as a host autophagy cargo receptor. Requires ATG8 protein expression to be recognized as an autophagic substrate. Activates ATG8CL-mediated selective autophagy, and contributes to defense against the fungal pathogen Phytophtora infestans. The sequence is that of Protein JOKA2 from Solanum tuberosum (Potato).